A 125-amino-acid chain; its full sequence is Ribosome-binding factor A (125 aa).

This sequence belongs to the RbfA family. As to quaternary structure, monomer. Binds 30S ribosomal subunits, but not 50S ribosomal subunits or 70S ribosomes.

It is found in the cytoplasm. Functionally, one of several proteins that assist in the late maturation steps of the functional core of the 30S ribosomal subunit. Associates with free 30S ribosomal subunits (but not with 30S subunits that are part of 70S ribosomes or polysomes). Required for efficient processing of 16S rRNA. May interact with the 5'-terminal helix region of 16S rRNA. In Xylella fastidiosa (strain M23), this protein is Ribosome-binding factor A.